A 331-amino-acid chain; its full sequence is MKAYAAPFEKFVNLADARLGTKIISVTDDWFADANRLFQPTPAVWKEGVFDDNGKWMDGWESRRKRFEGYDSAVIRLGVPGSIKGVDIDTSFFTGNYPPSASLEACFLASGEPDETTQWVEVLSAVELQGNSHHYHEINNDQAFSHLRFNIYPDGGVARLRVYGVPFRDWSSVGDNEQVDLAAALNGGRALACSDEHFGRMSNILNPGRGVNMGDGWETARRRTPGNDWVIVALGHPGEIEKIIVDTLHFKGNYPDTCSIQGAFVKGGTDSQIETQSLFWRELLPAQKLEMHAEHTFAEQIKALGPITHIRLNVFPDGGVSRLRVLGKVSK.

The protein belongs to the allantoicase family.

The enzyme catalyses allantoate + H2O = (S)-ureidoglycolate + urea. Its pathway is nitrogen metabolism; (S)-allantoin degradation; (S)-ureidoglycolate from allantoate (aminidohydrolase route): step 1/1. In Pseudomonas fluorescens (strain SBW25), this protein is Probable allantoicase.